The following is a 348-amino-acid chain: NADH-quinone oxidoreductase subunit H (348 aa).

8 helical membrane-spanning segments follow: residues Ile25–Leu45, Phe95–Ile115, Ile128–Gly148, Ile168–Phe188, Trp204–Thr224, Phe254–Phe274, Ile287–Leu307, and Val327–Ala347.

The protein belongs to the complex I subunit 1 family. NDH-1 is composed of 14 different subunits. Subunits NuoA, H, J, K, L, M, N constitute the membrane sector of the complex.

It localises to the cell inner membrane. It carries out the reaction a quinone + NADH + 5 H(+)(in) = a quinol + NAD(+) + 4 H(+)(out). Its function is as follows. NDH-1 shuttles electrons from NADH, via FMN and iron-sulfur (Fe-S) centers, to quinones in the respiratory chain. The immediate electron acceptor for the enzyme in this species is believed to be ubiquinone. Couples the redox reaction to proton translocation (for every two electrons transferred, four hydrogen ions are translocated across the cytoplasmic membrane), and thus conserves the redox energy in a proton gradient. This subunit may bind ubiquinone. The polypeptide is NADH-quinone oxidoreductase subunit H (Psychrobacter sp. (strain PRwf-1)).